Reading from the N-terminus, the 193-residue chain is Probable GTP-binding protein EngB (193 aa).

The 170-residue stretch at 19-188 (SVKEVCFMGR…HKQIFELFKA (170 aa)) folds into the EngB-type G domain. Residues 27-34 (GRSNVGKS), 53-57 (GRTQL), 70-73 (DLPG), 136-139 (NKFD), and 167-169 (VSA) each bind GTP. The Mg(2+) site is built by S34 and T55.

This sequence belongs to the TRAFAC class TrmE-Era-EngA-EngB-Septin-like GTPase superfamily. EngB GTPase family. Requires Mg(2+) as cofactor.

Its function is as follows. Necessary for normal cell division and for the maintenance of normal septation. The chain is Probable GTP-binding protein EngB from Mycoplasma pneumoniae (strain ATCC 29342 / M129 / Subtype 1) (Mycoplasmoides pneumoniae).